The chain runs to 612 residues: BTB/POZ domain-containing protein 9 (612 aa).

The BTB domain occupies 36–104; it reads GDVTFVVEKK…IYTGRATLTD (69 aa). The BACK domain occupies 142-240; sequence VCMTFDVASL…SLTELLNVVR (99 aa). The segment at 559-612 is disordered; it reads QQSNQKEDSSEEPGTGDPSTPNQQLDPHAPRAPSASSLPPSPGPNSRSPNQQNQ. The span at 589 to 612 shows a compositional bias: low complexity; it reads RAPSASSLPPSPGPNSRSPNQQNQ.

In terms of tissue distribution, expressed in the brain (at protein level).

This chain is BTB/POZ domain-containing protein 9 (Btbd9), found in Mus musculus (Mouse).